The chain runs to 64 residues: Large ribosomal subunit protein uL29 (64 aa).

This sequence belongs to the universal ribosomal protein uL29 family.

The polypeptide is Large ribosomal subunit protein uL29 (Solidesulfovibrio magneticus (strain ATCC 700980 / DSM 13731 / RS-1) (Desulfovibrio magneticus)).